The primary structure comprises 1279 residues: ATP-dependent helicase/nuclease subunit A (1279 aa).

A UvrD-like helicase ATP-binding domain is found at 4 to 499; sequence TKWTDEQRQA…VKLFKNFRSR (496 aa). 25-32 serves as a coordination point for ATP; that stretch reads AGAGAGKT. The UvrD-like helicase C-terminal domain maps to 526–853; the sequence is EEALKVGASY…RIMSIHKSKG (328 aa).

Belongs to the helicase family. AddA subfamily. As to quaternary structure, heterodimer of AddA and AddB/RexB. Mg(2+) is required as a cofactor.

The enzyme catalyses Couples ATP hydrolysis with the unwinding of duplex DNA by translocating in the 3'-5' direction.. It catalyses the reaction ATP + H2O = ADP + phosphate + H(+). In terms of biological role, the heterodimer acts as both an ATP-dependent DNA helicase and an ATP-dependent, dual-direction single-stranded exonuclease. Recognizes the chi site generating a DNA molecule suitable for the initiation of homologous recombination. The AddA nuclease domain is required for chi fragment generation; this subunit has the helicase and 3' -&gt; 5' nuclease activities. This Clostridium botulinum (strain ATCC 19397 / Type A) protein is ATP-dependent helicase/nuclease subunit A.